Here is a 191-residue protein sequence, read N- to C-terminus: UPF0669 protein C6orf120 (191 aa).

The signal sequence occupies residues methionine 1–alanine 30. N-linked (GlcNAc...) asparagine glycosylation occurs at asparagine 53.

This sequence belongs to the UPF0669 family. As to expression, mainly expressed in hepatocytes and some weak expression in germinal center cells of lymph nodes.

It localises to the secreted. Functionally, may be involved in induction of apoptosis in CD4(+) T-cells, but not CD8(+) T-cells or hepatocytes. In Homo sapiens (Human), this protein is UPF0669 protein C6orf120 (C6orf120).